The primary structure comprises 409 residues: MAREKFERTKPHVNIGTIGHVDHGKTTLTAAITATLALDGGAQAKAYADIDGAPEERARGITINTAHVEYETKDRHYAHVDCPGHADYVKNMITGAAQMDGAILVVSAADGPMPQTREHILLSKQVGVPNIVVFLNKEDQVDDEELLELVELEVRELLSAYDFPGDDIPICPGSALQAIEAITANPTVKRGDNKWVDKIYALMDAVDEYIPTPERDVEKTFLMAIEDVFSITGRGTVATGRIERGVVKVGENVEIVGVTDTQTTTITGIEMFQKTLEEGFAGDNVGILLRGVTRENIERGMVLAKPGTITPHTSFESEVYVLTKDEGGRHTPFFTGYRPQFYVRTTDVTGSITQFTADDGSVVEMVMPGDRIKMTAEFIYPVAIEAGMRFAIREGGRTIGAGVVSKIVK.

The tr-type G domain occupies 10 to 214; the sequence is KPHVNIGTIG…AVDEYIPTPE (205 aa). The tract at residues 19–26 is G1; it reads GHVDHGKT. GTP is bound at residue 19 to 26; the sequence is GHVDHGKT. Residue Thr26 participates in Mg(2+) binding. Positions 60–64 are G2; it reads GITIN. The G3 stretch occupies residues 81–84; the sequence is DCPG. GTP-binding positions include 81–85 and 136–139; these read DCPGH and NKED. Residues 136-139 are G4; it reads NKED. The interval 174–176 is G5; that stretch reads SAL.

It belongs to the TRAFAC class translation factor GTPase superfamily. Classic translation factor GTPase family. EF-Tu/EF-1A subfamily.

It is found in the plastid. Its subcellular location is the chloroplast. The enzyme catalyses GTP + H2O = GDP + phosphate + H(+). In terms of biological role, GTP hydrolase that promotes the GTP-dependent binding of aminoacyl-tRNA to the A-site of ribosomes during protein biosynthesis. In Phaeodactylum tricornutum (strain CCAP 1055/1), this protein is Elongation factor Tu, chloroplastic (tufA).